We begin with the raw amino-acid sequence, 716 residues long: Cytoplasmic polyadenylation element-binding protein 3 (716 aa).

The span at 1-11 (MQDDLLMDKSK) shows a compositional bias: basic and acidic residues. 2 disordered regions span residues 1–118 (MQDD…WSTG) and 162–209 (AQTQ…RSAA). Low complexity-rich tracts occupy residues 13–31 (QPQSQQQQRQQQQQQQQLQ) and 54–63 (SSAVPALSPA). The span at 91–100 (PQQPPPPQEP) shows a compositional bias: pro residues. Positions 107 to 118 (LSPSFGSTWSTG) are enriched in polar residues. Positions 169-186 (QPPPPAPQPPQPAQPPQA) are enriched in pro residues. A compositionally biased stretch (low complexity) spans 187 to 209 (QPSQQRRSPASPSQAPYAQRSAA). A phosphoserine mark is found at Ser194, Ser197, and Ser291. Arg309 carries the asymmetric dimethylarginine modification. A phosphoserine mark is found at Ser419 and Ser420. 2 RRM domains span residues 459-550 (RKVF…PWNL) and 567-649 (KTIF…PYVL).

This sequence belongs to the RRM CPEB family. Following synaptic activity, aggregates to form amyloid-like oligomers. Aggregation requires an intact actin cytoskeleton. Interacts with STAT5B; this inhibits STAT5B-mediated transcriptional activation. Interacts with E3 ubiquitin-protein ligase NEURL1; this leads to monoubiquitination and activation of CPEB3. Interacts with CAPN2; this leads to cleavage of CPEB3. Interacts (via C-terminal RNA-binding region) with TOB1; TOB1 also binds CNOT7/CAF1 and recruits it to CPEB3 to form a ternary complex. Interacts with SUMO-conjugating enzyme UBC9. Interacts with IPO5; the interaction is enhanced in a RAN-regulated manner following neuronal stimulation and mediates CPEB3 nuclear import. Interacts with exportin XPO1/CRM1. Activated by NEURL1-mediated monoubiquitination, resulting in the growth of new dendritic spines and increased levels of GRIA1 and GRIA2. NEURL1-mediated monoubiquitination facilitates synaptic plasticity and hippocampal-dependent memory storage. Post-translationally, under basal unstimulated conditions when CPEB3 is mainly unaggregated, sumoylated and acts as a translational repressor. Following neuronal stimulation, becomes desumoylated and aggregated which is required for the translation of mRNA targets and for dendritic filopodia formation. In terms of processing, following neuronal stimulation, cleaved by CAPN2 which abolishes its translational repressor activity, leading to translation of CPEB3 target mRNAs. Phosphorylation is enhanced by neuronal stimulation. In terms of tissue distribution, highly expressed in brain (at protein level). In brain, expressed in the hippocampus, granule cells and interneurons of the cerebellum, and mitral cells of the olfactory bulb (at protein level). Detected in the spinal cord and in peripheral dorsal root ganglia (at protein level). In the retina, strongly expressed in the retinal ganglion layer and, to a lesser extent, in the inner margin of the inner nuclear layer with expression also detected in the inner and outer plexiform layers (at protein level). Highly expressed in brain and heart, less in liver, kidney, embryo, skeletal muscle, lung and ovary. Weakly expressed in granular cells of dentate gyrus and the pyramidal cells of CA3 and CA1 of the hippocampus.

It localises to the cytoplasm. Its subcellular location is the nucleus. The protein resides in the synapse. The protein localises to the cell projection. It is found in the dendrite. It localises to the postsynaptic density. Functionally, sequence-specific RNA-binding protein which acts as a translational repressor in the basal unstimulated state but, following neuronal stimulation, acts as a translational activator. In contrast to CPEB1, does not bind to the cytoplasmic polyadenylation element (CPE), a uridine-rich sequence element within the mRNA 3'-UTR, but binds to a U-rich loop within a stem-loop structure. Required for the consolidation and maintenance of hippocampal-based long term memory. In the basal state, binds to the mRNA 3'-UTR of the glutamate receptors GRIA1 and GRIA2 and negatively regulates their translation. Also represses the translation of DLG4, GRIN1 GRIN2A and GRIN2B. When activated, acts as a translational activator of GRIA1 and GRIA2. In the basal state, suppresses SUMO2 translation but activates it following neuronal stimulation. Binds to the 3'-UTR of TRPV1 mRNA and represses TRPV1 translation which is required to maintain normal thermoception. Binds actin mRNA, leading to actin translational repression in the basal state and to translational activation following neuronal stimulation. Negatively regulates target mRNA levels by binding to TOB1 which recruits CNOT7/CAF1 to a ternary complex and this leads to target mRNA deadenylation and decay. In addition to its role in translation, binds to and inhibits the transcriptional activation activity of STAT5B without affecting its dimerization or DNA-binding activity. This, in turn, represses transcription of the STAT5B target gene EGFR which has been shown to play a role in enhancing learning and memory performance. In contrast to CPEB1, CPEB2 and CPEB4, not required for cell cycle progression. The sequence is that of Cytoplasmic polyadenylation element-binding protein 3 (Cpeb3) from Mus musculus (Mouse).